The chain runs to 119 residues: Large ribosomal subunit protein uL18 (119 aa).

This sequence belongs to the universal ribosomal protein uL18 family. In terms of assembly, part of the 50S ribosomal subunit; part of the 5S rRNA/L5/L18/L25 subcomplex. Contacts the 5S and 23S rRNAs.

Its function is as follows. This is one of the proteins that bind and probably mediate the attachment of the 5S RNA into the large ribosomal subunit, where it forms part of the central protuberance. The protein is Large ribosomal subunit protein uL18 of Oceanobacillus iheyensis (strain DSM 14371 / CIP 107618 / JCM 11309 / KCTC 3954 / HTE831).